A 691-amino-acid chain; its full sequence is MARDFPLERVRNIGIAAHIDAGKTTTTERILFYSGVVHKIGEVHDGAAVTDWMAQERERGITITAAAISTSWNNHRINIIDTPGHVDFTIEVERSMRVLDGVIAVFCAVGGVQPQSETVWRQADRYSVPRMVFVNKMDRTGADFLKVFGQIKDRLKANAVPIQLPIGAEGELSGIIDLVENKAHIYKDDLGQDIEVTDVPADMKDEADKWRNVLMETIAENDEDLIEKFLESGELSNSDLKRGIRTGVLKHNLVPVLCGSAFKNKGVQLVLDAVVDYLPAPIDVPPIQGLLPNGKEAVRPSDDNAPFSALAFKVMADPYGKLTFVRMYSGVLEKGSYVLNSTKDTKERISRLVVLKADDREEVDALRAGDLGAVLGLKNTTTGDTLCATDDPIVLETLFVPEPVISVAVEPKTKGDMEKLSKALVSLAEEDPTFRVRTDQETGQTVIAGMGELHLEILVDRMLREFKVEANIGAPQVSYRETIRGSSKGEGKFSRQTGGKGQYGHVVIEMEPGEPESGFEFINKIVGGIVPKEYIKPAEQGMKETCESGVIAGYPLIDVKCTMVDGSYHDVDSSEMAFKIAGSMAFKDAVKKCNPVLLEPMMKVEVEIPEDFLGSVIGDLSSRRGQVEGQSVDDGTSKVSSKVPLAEMFGYATELRSMTQGRGIFSMEFSHYEDVPRNVAEAIISKNQGNS.

One can recognise a tr-type G domain in the interval 8–282 (ERVRNIGIAA…AVVDYLPAPI (275 aa)). Residues 17-24 (AHIDAGKT), 81-85 (DTPGH), and 135-138 (NKMD) each bind GTP.

The protein belongs to the TRAFAC class translation factor GTPase superfamily. Classic translation factor GTPase family. EF-G/EF-2 subfamily.

It is found in the cytoplasm. Catalyzes the GTP-dependent ribosomal translocation step during translation elongation. During this step, the ribosome changes from the pre-translocational (PRE) to the post-translocational (POST) state as the newly formed A-site-bound peptidyl-tRNA and P-site-bound deacylated tRNA move to the P and E sites, respectively. Catalyzes the coordinated movement of the two tRNA molecules, the mRNA and conformational changes in the ribosome. The sequence is that of Elongation factor G from Synechococcus sp. (strain CC9311).